A 281-amino-acid chain; its full sequence is Ribosomal RNA small subunit methyltransferase A (281 aa).

Positions 36, 38, 63, 84, 109, and 127 each coordinate S-adenosyl-L-methionine.

Belongs to the class I-like SAM-binding methyltransferase superfamily. rRNA adenine N(6)-methyltransferase family. RsmA subfamily.

Its subcellular location is the cytoplasm. It carries out the reaction adenosine(1518)/adenosine(1519) in 16S rRNA + 4 S-adenosyl-L-methionine = N(6)-dimethyladenosine(1518)/N(6)-dimethyladenosine(1519) in 16S rRNA + 4 S-adenosyl-L-homocysteine + 4 H(+). Specifically dimethylates two adjacent adenosines (A1518 and A1519) in the loop of a conserved hairpin near the 3'-end of 16S rRNA in the 30S particle. May play a critical role in biogenesis of 30S subunits. The polypeptide is Ribosomal RNA small subunit methyltransferase A (Borrelia garinii subsp. bavariensis (strain ATCC BAA-2496 / DSM 23469 / PBi) (Borreliella bavariensis)).